A 394-amino-acid polypeptide reads, in one-letter code: 3-phenylpropionate/cinnamic acid dioxygenase ferredoxin--NAD(+) reductase component (394 aa).

Position 5–36 (Thr5–Lys36) interacts with FAD. An NAD(+)-binding site is contributed by Arg146–Glu174.

This sequence belongs to the bacterial ring-hydroxylating dioxygenase ferredoxin reductase family. As to quaternary structure, this dioxygenase system consists of four proteins: the two subunits of the hydroxylase component (HcaE and HcaF), a ferredoxin (HcaC) and a ferredoxin reductase (HcaD). It depends on FAD as a cofactor.

The enzyme catalyses 2 reduced [2Fe-2S]-[ferredoxin] + NAD(+) + H(+) = 2 oxidized [2Fe-2S]-[ferredoxin] + NADH. It functions in the pathway aromatic compound metabolism; 3-phenylpropanoate degradation. In terms of biological role, part of the multicomponent 3-phenylpropionate dioxygenase, that converts 3-phenylpropionic acid (PP) and cinnamic acid (CI) into 3-phenylpropionate-dihydrodiol (PP-dihydrodiol) and cinnamic acid-dihydrodiol (CI-dihydrodiol), respectively. The protein is 3-phenylpropionate/cinnamic acid dioxygenase ferredoxin--NAD(+) reductase component of Photorhabdus laumondii subsp. laumondii (strain DSM 15139 / CIP 105565 / TT01) (Photorhabdus luminescens subsp. laumondii).